Consider the following 216-residue polypeptide: Eukaryotic translation initiation factor 3 subunit K (216 aa).

One can recognise a PCI domain in the interval 40-202; sequence YDLDANLAVL…HIKSKNIAEK (163 aa).

It belongs to the eIF-3 subunit K family. Component of the eukaryotic translation initiation factor 3 (eIF-3) complex.

The protein localises to the cytoplasm. Component of the eukaryotic translation initiation factor 3 (eIF-3) complex, which is involved in protein synthesis of a specialized repertoire of mRNAs and, together with other initiation factors, stimulates binding of mRNA and methionyl-tRNAi to the 40S ribosome. The eIF-3 complex specifically targets and initiates translation of a subset of mRNAs involved in cell proliferation. The sequence is that of Eukaryotic translation initiation factor 3 subunit K from Nematostella vectensis (Starlet sea anemone).